The following is a 108-amino-acid chain: MRDMMNMMKKAKEMQEKMQKIQEEMANLQVTGTAGGGLVSITLNGKNTITAIKIDPSLLKPEEIEILEDLIMAAYNEAKTKIEIAMQEKTKSMTAGLPLPPDFKLPFS.

This sequence belongs to the YbaB/EbfC family. As to quaternary structure, homodimer.

It localises to the cytoplasm. It is found in the nucleoid. Binds to DNA and alters its conformation. May be involved in regulation of gene expression, nucleoid organization and DNA protection. This Bartonella henselae (strain ATCC 49882 / DSM 28221 / CCUG 30454 / Houston 1) (Rochalimaea henselae) protein is Nucleoid-associated protein BH02310.